Consider the following 905-residue polypeptide: Probable coatomer subunit gamma (905 aa).

5 HEAT repeats span residues 265–302, 303–340, 374–412, 414–450, and 525–563; these read TQFRDQMVPFLHGWLKSKGDMVNLEVARNMVRLKNISD, DDLQPVVSVLKIFLSSHRSATRFSAIRTLNELAMTRPH, DESVDRLMKQIVTFMSDISDNFKIIVVDAIRSLCLKFPR, QDSMLTFLSNILCDEGGYEFKRAAVDAISDMIKYIPE, and KFVQRSVKVILTRCLEDADDEVRDRAAFSVKALEDRDAF. Ser-604 carries the post-translational modification Phosphoserine.

It belongs to the COPG family. Oligomeric complex that consists of at least the alpha, beta, beta', gamma, delta, epsilon and zeta subunits.

It is found in the cytoplasm. Its subcellular location is the golgi apparatus membrane. The protein localises to the cytoplasmic vesicle. It localises to the COPI-coated vesicle membrane. The coatomer is a cytosolic protein complex that binds to dilysine motifs and reversibly associates with Golgi non-clathrin-coated vesicles, which further mediate biosynthetic protein transport from the ER, via the Golgi up to the trans Golgi network. Coatomer complex is required for budding from Golgi membranes, and is essential for the retrograde Golgi-to-ER transport of dilysine-tagged proteins. This is Probable coatomer subunit gamma (sec21) from Schizosaccharomyces pombe (strain 972 / ATCC 24843) (Fission yeast).